A 1277-amino-acid chain; its full sequence is MAKGAVTKLKFNSPIISTSDQLISTNELLDRLKALHEELASLDQDNTDLTGLDKYRDALVSRKLLKHKDVGIRAFTACCLSDILRLYAPDAPYTDAQLTDIFKLVLSQFEQLGDQENGYHIQQTYLITKLLEYRSIVLLADLPSSNNLLIELFHIFYDPNKSFPARLFNVIGGILGEVISEFDSVPLEVLRLIFNKFLTYNPNEIPEGLNVTSDCGYEVSLILCDTYSNRMSRHLTKYYSEIIHEATNDDNNSRLLTVVVKLHKLVLRLWETVPELINAVIGFIYHELSSENELFRKEATKLIGQILTSYSDLNFVSTHSDTFKAWISKIADISPDVRVEWTESIPQIIATREDISKELNQALAKTFIDSDPRVRRTSVMIFNKVPVTEIWKNITNKAIYTSLLHLAREKHKEVRELCINTMAKFYSNSLNEIERTYQNKEIWEIIDTIPSTLYNLYYINDLNINEQVDSVIFEYLLPFEPDNDKRVHRLLTVLSHFDKKAFTSFFAFNARQIKISFAISKYIDFSKFLNNQESMSSSQGPIVMNKYNQTLQWLASGLSDSTKAIDALETIKQFNDERIFYLLNACVTNDIPFLTFKNCYNELVSKLQTPGLFKKYNISTGASIMPRDIAKVIQILLFRASPIIYNVSNISVLLNLSNNSDAKQLDLKRRILDDISKVNPTLFKDQIRTLKTIIKDLDDPDAEKNDNLSLEEALKTLYKASKTLKDQVDFDDTFFFTKLYDFAVESKPEITKYATKLIALSPKAEETLKKIKIRILPLDLQKDKYFTSHIIVLMEIFKKFPHVLNDDSTDIISYLIKEVLLSNQVVGDSKKEIDWVEDSLLSDTKYSAIGNKVFTLKLFTNKLRSIAPDVPRDELAESFTEKTMKLFFYLIASGGELISEFNKEFYPTPSNYQTKLRCVAGIQVLKLARISNLNNFIKPSDIIKLINLVEDESLPVRKTFLEQLKDYVANELISIKFLPLVFFTAYEPDVELKTTTKIWINFTFGLKSFKKGTIFERALPRLIHAIAHHPDIVGGLDSEGDAYLNALTTAIDYLLFYFDSIAAQENFSLLYYLSERVKNYQDKLVEDEIDEEEGPQKEEAPKKHRPYGQKMYIIGELSQMILLNLKEKKNWQHSAYPGKLNLPSDLFKPFATVQEAQLSFKTYIPESLTEKIQNNIKAKIGRILHTSQTQRQRLQKRLLAHENNESQKKKKKVHHARSQADDEEGDGDRESDSDDDSYSPSNKNETKKGHENIVMKKLRVRKEVDYKDDEDDDIEMT.

The stretch at 393 to 429 is one HEAT repeat; that stretch reads NITNKAIYTSLLHLAREKHKEVRELCINTMAKFYSNS. Residues 1201-1277 form a disordered region; sequence HENNESQKKK…DDEDDDIEMT (77 aa). The segment covering 1208 to 1217 has biased composition (basic residues); sequence KKKKKVHHAR. The segment covering 1221 to 1237 has biased composition (acidic residues); it reads DDEEGDGDRESDSDDDS. Ser1231 and Ser1233 each carry phosphoserine. Positions 1244-1254 are enriched in basic and acidic residues; sequence NETKKGHENIV. A compositionally biased stretch (acidic residues) spans 1266–1277; the sequence is YKDDEDDDIEMT.

Belongs to the PDS5 family. Post-translationally, acetylated by ECO1.

It localises to the nucleus. Its function is as follows. Essential for the establishment and maintenance of sister chromatid cohesion at centromere proximal and distal regions during S phase. Also required for chromosomal condensation. This is Sister chromatid cohesion protein PDS5 (PDS5) from Saccharomyces cerevisiae (strain ATCC 204508 / S288c) (Baker's yeast).